We begin with the raw amino-acid sequence, 269 residues long: Autophagy-related protein 5 (269 aa).

K102 is covalently cross-linked (Glycyl lysine isopeptide (Lys-Gly) (interchain with G-Cter in ATG12)).

This sequence belongs to the ATG5 family. In terms of assembly, conjugated with ATG12. The ATG5-ATG12 conjugate forms a complex with several units of ATG16. The ATG12-ATG5 conjugate also associates with ATG3. In terms of processing, conjugated to ATG12; which is essential for autophagy. Conjugation with ATG12 involves ATG7 as an E1-like activating enzyme and ATG10 as an E2-like conjugating enzyme.

Its subcellular location is the preautophagosomal structure membrane. Functionally, involved in cytoplasm to vacuole transport (Cvt) and autophagic vesicle formation. Autophagy is essential for maintenance of amino acid levels and protein synthesis under nitrogen starvation. Required for selective autophagic degradation of the nucleus (nucleophagy). Also required for mitophagy, which eliminates defective or superfluous mitochondria in order to fulfill cellular energy requirements and prevent excess ROS production. Conjugation with ATG12, through a ubiquitin-like conjugating system involving ATG7 as an E1-like activating enzyme and ATG10 as an E2-like conjugating enzyme, is essential for its function. The ATG12-ATG5 conjugate acts as an E3-like enzyme which is required for lipidation of ATG8 and ATG8 association to the vesicle membranes. ATG12-ATG5 rearranges the ATG3 catalytic center and enhances its E2 activity. Required for proper vegetative growth, asexual/sexual reproduction, but, unlike several plant and animal pathogenic fungi, where ATG5 is required for infection, in B.bassiana it is dispensable for pathogenesis. This is Autophagy-related protein 5 from Beauveria bassiana (strain ARSEF 2860) (White muscardine disease fungus).